Reading from the N-terminus, the 199-residue chain is GTP cyclohydrolase-2 (199 aa).

49–53 (RIHSE) contacts GTP. 3 residues coordinate Zn(2+): C54, C65, and C67. GTP-binding positions include Q70, 92-94 (EGR), and T114. The active-site Proton acceptor is D126. R128 functions as the Nucleophile in the catalytic mechanism. Residues T149 and K154 each contribute to the GTP site. The segment at 172–199 (ETGRNPHNSHYLETKRGKLGHLLEGDSE) is disordered.

The protein belongs to the GTP cyclohydrolase II family. Requires Zn(2+) as cofactor.

It carries out the reaction GTP + 4 H2O = 2,5-diamino-6-hydroxy-4-(5-phosphoribosylamino)-pyrimidine + formate + 2 phosphate + 3 H(+). The protein operates within cofactor biosynthesis; riboflavin biosynthesis; 5-amino-6-(D-ribitylamino)uracil from GTP: step 1/4. Functionally, catalyzes the conversion of GTP to 2,5-diamino-6-ribosylamino-4(3H)-pyrimidinone 5'-phosphate (DARP), formate and pyrophosphate. In Teredinibacter turnerae (strain ATCC 39867 / T7901), this protein is GTP cyclohydrolase-2.